The following is a 509-amino-acid chain: Maturase K (509 aa).

It belongs to the intron maturase 2 family. MatK subfamily.

The protein resides in the plastid. In terms of biological role, usually encoded in the trnK tRNA gene intron. Probably assists in splicing its own and other chloroplast group II introns. This Cuscuta reflexa (Southern Asian dodder) protein is Maturase K.